Reading from the N-terminus, the 700-residue chain is Glycine--tRNA ligase beta subunit (700 aa).

Belongs to the class-II aminoacyl-tRNA synthetase family. As to quaternary structure, tetramer of two alpha and two beta subunits.

It localises to the cytoplasm. It carries out the reaction tRNA(Gly) + glycine + ATP = glycyl-tRNA(Gly) + AMP + diphosphate. This Magnetococcus marinus (strain ATCC BAA-1437 / JCM 17883 / MC-1) protein is Glycine--tRNA ligase beta subunit.